Reading from the N-terminus, the 219-residue chain is Ribose-5-phosphate isomerase A (219 aa).

Residues Thr28–Thr31, Asp81–Asp84, and Lys94–Gly97 contribute to the substrate site. Glu103 acts as the Proton acceptor in catalysis. Lys121 provides a ligand contact to substrate.

Belongs to the ribose 5-phosphate isomerase family. Homodimer.

It carries out the reaction aldehydo-D-ribose 5-phosphate = D-ribulose 5-phosphate. It participates in carbohydrate degradation; pentose phosphate pathway; D-ribose 5-phosphate from D-ribulose 5-phosphate (non-oxidative stage): step 1/1. Catalyzes the reversible conversion of ribose-5-phosphate to ribulose 5-phosphate. This Methylibium petroleiphilum (strain ATCC BAA-1232 / LMG 22953 / PM1) protein is Ribose-5-phosphate isomerase A.